A 402-amino-acid chain; its full sequence is Phosphoglycerate kinase (402 aa).

Residues 24–26 (DLN), Arg39, 62–65 (HLGR), Arg121, and Arg161 contribute to the substrate site. Residues Lys211, Gly299, Glu330, and 359–362 (GGDS) each bind ATP.

This sequence belongs to the phosphoglycerate kinase family. As to quaternary structure, monomer.

Its subcellular location is the cytoplasm. The enzyme catalyses (2R)-3-phosphoglycerate + ATP = (2R)-3-phospho-glyceroyl phosphate + ADP. It functions in the pathway carbohydrate degradation; glycolysis; pyruvate from D-glyceraldehyde 3-phosphate: step 2/5. The chain is Phosphoglycerate kinase from Mycolicibacterium gilvum (strain PYR-GCK) (Mycobacterium gilvum (strain PYR-GCK)).